Here is a 423-residue protein sequence, read N- to C-terminus: MAKTIQAIRGMNDCAPTESPLWQWIEAQVRNVLNSYGYSEVRMPIVESTPLFARAIGEVTDVVSKEMYTFWDNDEQLTLRPEGTAGCVRAAIEHGWIYNNEQRLWYIGPMFRHERPQKGRYRQFHQVGVEVFGIANPEIDAELIMLTYRLWKALGIDQHVTLQLNSIGSLEARANYRSALVGFLENHQDLMSDEEKERLVRNPLRILDTKNPELQKVLDNAPKLLDYLDDESRAHFEQLCSLLDAVGIQYEINPKLVRGLDYYNKTVFEWVTSALGAQGTVCGGGRYDGLVEQLGGHATPSIGFAMGLERLVLLVQEVNPNVPTKSAVDIYVVYQGEGATLVAFELAEKVRSELPHLNTMLHCSGGNFKKQFKRADKSGATLALVIGESEVQNKQVVVKHLQGGTDQQTLDLVNIIDYLQTQF.

The protein belongs to the class-II aminoacyl-tRNA synthetase family. As to quaternary structure, homodimer.

The protein resides in the cytoplasm. The catalysed reaction is tRNA(His) + L-histidine + ATP = L-histidyl-tRNA(His) + AMP + diphosphate + H(+). The chain is Histidine--tRNA ligase from Haemophilus influenzae (strain 86-028NP).